Reading from the N-terminus, the 204-residue chain is Large ribosomal subunit protein eL15 (204 aa).

This sequence belongs to the eukaryotic ribosomal protein eL15 family. As to quaternary structure, component of the large ribosomal subunit.

Its subcellular location is the cytoplasm. Its function is as follows. Component of the large ribosomal subunit. The ribosome is a large ribonucleoprotein complex responsible for the synthesis of proteins in the cell. In Hypophthalmichthys nobilis (Bighead carp), this protein is Large ribosomal subunit protein eL15 (rpl15).